A 341-amino-acid polypeptide reads, in one-letter code: LRP2-binding protein (341 aa).

The TPR repeat unit spans residues 56–89 (VQANFLLGQLFFEEGWYEDALLQFEKVKDEDNQA). Sel1-like repeat units follow at residues 90 to 122 (LYQA…TSDC), 130 to 165 (YAAA…DNGN), 170 to 203 (LKAQ…GNGS), 204 to 239 (LESQ…ERGN), 240 to 271 (VYAQ…SHDN), and 291 to 326 (AIAT…QLDA).

It localises to the cytoplasm. May act as an adapter that regulates LRP2 function. The protein is LRP2-binding protein (lrp2bp) of Xenopus laevis (African clawed frog).